A 278-amino-acid polypeptide reads, in one-letter code: Putative phosphatase MG265 (278 aa).

D9 acts as the Nucleophile in catalysis. Mg(2+) is bound at residue D9. L10 contacts phosphate. D11 contributes to the Mg(2+) binding site. Phosphate is bound by residues 43–44 (SG) and K204. Residue D227 participates in Mg(2+) binding. N230 is a binding site for phosphate.

Belongs to the HAD-like hydrolase superfamily. Cof family. Mg(2+) serves as cofactor.

This is Putative phosphatase MG265 from Mycoplasma genitalium (strain ATCC 33530 / DSM 19775 / NCTC 10195 / G37) (Mycoplasmoides genitalium).